Reading from the N-terminus, the 259-residue chain is MSLKSIAKQALSLMDLTTLNDNDTDEKVVTLCQQGNTLFGTPAAVCVYPRFIPIARKTLKAQGAEQVKIATVTNFPHGNDDIDIAVAETKAAVAYGADEVDVVFPYRALIAGNEQVGFELVKQCKAVCSANNVALKVIIESGELKTAELIRKASEISIKAGADFIKTSTGKVPVNATLESAHIMLETIRDLGVADSVGFKAAGGVKTTEEAEQYLALTAEILGQDWINQAHFRFGASSLLANLLATLNDEQVNQNVTGY.

Catalysis depends on aspartate 101, which acts as the Proton donor/acceptor. Residue lysine 166 is the Schiff-base intermediate with acetaldehyde of the active site. Lysine 200 serves as the catalytic Proton donor/acceptor.

Belongs to the DeoC/FbaB aldolase family. DeoC type 2 subfamily.

Its subcellular location is the cytoplasm. The catalysed reaction is 2-deoxy-D-ribose 5-phosphate = D-glyceraldehyde 3-phosphate + acetaldehyde. Its pathway is carbohydrate degradation; 2-deoxy-D-ribose 1-phosphate degradation; D-glyceraldehyde 3-phosphate and acetaldehyde from 2-deoxy-alpha-D-ribose 1-phosphate: step 2/2. In terms of biological role, catalyzes a reversible aldol reaction between acetaldehyde and D-glyceraldehyde 3-phosphate to generate 2-deoxy-D-ribose 5-phosphate. The sequence is that of Deoxyribose-phosphate aldolase from Glaesserella parasuis serovar 5 (strain SH0165) (Haemophilus parasuis).